The primary structure comprises 321 residues: Beta-ketoacyl-[acyl-carrier-protein] synthase III (321 aa).

Residues Cys-116 and His-248 contribute to the active site. Positions 249–253 (QANLR) are ACP-binding. Residue Asn-278 is part of the active site.

The protein belongs to the thiolase-like superfamily. FabH family. Homodimer.

The protein localises to the cytoplasm. The catalysed reaction is malonyl-[ACP] + acetyl-CoA + H(+) = 3-oxobutanoyl-[ACP] + CO2 + CoA. It participates in lipid metabolism; fatty acid biosynthesis. Its function is as follows. Catalyzes the condensation reaction of fatty acid synthesis by the addition to an acyl acceptor of two carbons from malonyl-ACP. Catalyzes the first condensation reaction which initiates fatty acid synthesis and may therefore play a role in governing the total rate of fatty acid production. Possesses both acetoacetyl-ACP synthase and acetyl transacylase activities. Its substrate specificity determines the biosynthesis of branched-chain and/or straight-chain of fatty acids. This chain is Beta-ketoacyl-[acyl-carrier-protein] synthase III, found in Yersinia enterocolitica serotype O:8 / biotype 1B (strain NCTC 13174 / 8081).